We begin with the raw amino-acid sequence, 265 residues long: Phosphatidylserine decarboxylase proenzyme (265 aa).

The active-site Schiff-base intermediate with substrate; via pyruvic acid is the serine 183. Serine 183 carries the post-translational modification Pyruvic acid (Ser); by autocatalysis. The segment at 216–246 (TAPQTESEPESEPALQTAPVETAANPSAEQR) is disordered.

The protein belongs to the phosphatidylserine decarboxylase family. PSD-A subfamily. Heterodimer of a large membrane-associated beta subunit and a small pyruvoyl-containing alpha subunit. It depends on pyruvate as a cofactor. Is synthesized initially as an inactive proenzyme. Formation of the active enzyme involves a self-maturation process in which the active site pyruvoyl group is generated from an internal serine residue via an autocatalytic post-translational modification. Two non-identical subunits are generated from the proenzyme in this reaction, and the pyruvate is formed at the N-terminus of the alpha chain, which is derived from the carboxyl end of the proenzyme. The post-translation cleavage follows an unusual pathway, termed non-hydrolytic serinolysis, in which the side chain hydroxyl group of the serine supplies its oxygen atom to form the C-terminus of the beta chain, while the remainder of the serine residue undergoes an oxidative deamination to produce ammonia and the pyruvoyl prosthetic group on the alpha chain.

The protein resides in the cell membrane. The catalysed reaction is a 1,2-diacyl-sn-glycero-3-phospho-L-serine + H(+) = a 1,2-diacyl-sn-glycero-3-phosphoethanolamine + CO2. The protein operates within phospholipid metabolism; phosphatidylethanolamine biosynthesis; phosphatidylethanolamine from CDP-diacylglycerol: step 2/2. In terms of biological role, catalyzes the formation of phosphatidylethanolamine (PtdEtn) from phosphatidylserine (PtdSer). This chain is Phosphatidylserine decarboxylase proenzyme, found in Neisseria meningitidis serogroup B (strain ATCC BAA-335 / MC58).